The primary structure comprises 232 residues: Ethylene-responsive transcription factor ERF025 (232 aa).

The span at 1-29 (MSNNNNSPTTVNQETTTSREVSITLPTDQ) shows a compositional bias: polar residues. Residues 1–63 (MSNNNNSPTT…TATGLSGKHS (63 aa)) are disordered. Positions 30 to 50 (SPQTSPGSSSSPSPRPSGGSP) are enriched in low complexity. Positions 64–120 (IFRGIRLRNGKWVSEIREPRKTTRIWLGTYPVPEMAAAAYDVAALALKGPDAVLNFP) form a DNA-binding region, AP2/ERF. The interval 213–232 (PTMEDDSPENHEGDNLWSYK) is disordered.

This sequence belongs to the AP2/ERF transcription factor family. ERF subfamily.

It is found in the nucleus. Its function is as follows. Probably acts as a transcriptional activator. Binds to the GCC-box pathogenesis-related promoter element. May be involved in the regulation of gene expression by stress factors and by components of stress signal transduction pathways. The sequence is that of Ethylene-responsive transcription factor ERF025 (ERF025) from Arabidopsis thaliana (Mouse-ear cress).